The primary structure comprises 477 residues: PEP-dependent dihydroxyacetone kinase, phosphoryl donor subunit DhaM (477 aa).

Residues methionine 1–leucine 135 enclose the PTS EIIA type-4 domain. Histidine 9 serves as the catalytic Tele-phosphohistidine intermediate. The HPr domain occupies alanine 156–asparagine 243. Histidine 170 functions as the Pros-phosphohistidine intermediate in the catalytic mechanism. Positions histidine 269–serine 477 are PTS EI-like, N-terminal part. Histidine 435 (tele-phosphohistidine intermediate) is an active-site residue.

Belongs to the PEP-utilizing enzyme family. As to quaternary structure, homodimer. The dihydroxyacetone kinase complex is composed of a homodimer of DhaM, a homodimer of DhaK and the subunit DhaL.

It carries out the reaction dihydroxyacetone + phosphoenolpyruvate = dihydroxyacetone phosphate + pyruvate. In terms of biological role, component of the dihydroxyacetone kinase complex, which is responsible for the phosphoenolpyruvate (PEP)-dependent phosphorylation of dihydroxyacetone. DhaM serves as the phosphoryl donor. Is phosphorylated by phosphoenolpyruvate in an EI- and HPr-dependent reaction, and a phosphorelay system on histidine residues finally leads to phosphoryl transfer to DhaL and dihydroxyacetone. The protein is PEP-dependent dihydroxyacetone kinase, phosphoryl donor subunit DhaM of Providencia stuartii (strain MRSN 2154).